The chain runs to 156 residues: Persephin (156 aa).

Positions 1-21 (MAAGRLRILCLLLLSLHPSLG) are cleaved as a signal peptide. 3 disulfide bridges follow: Cys66/Cys124, Cys93/Cys152, and Cys97/Cys154.

The protein belongs to the TGF-beta family. GDNF subfamily. As to quaternary structure, homodimer; disulfide-linked. Interacts with GFRA4 coreceptor and RET: forms a 2:2:2 ternary complex composed of PSPN ligand, GFRA4 and RET receptor.

It is found in the secreted. Functionally, growth factor that exhibits neurotrophic activity on mesencephalic dopaminergic and motor neurons. Acts by binding to its coreceptor, GFRA4, leading to autophosphorylation and activation of the RET receptor. The chain is Persephin from Mus musculus (Mouse).